Here is a 291-residue protein sequence, read N- to C-terminus: tRNA U34 carboxymethyltransferase (291 aa).

Residues Lys-61, Trp-75, Lys-80, Gly-100, 122-124 (DPS), 149-150 (VE), Tyr-169, and Arg-284 contribute to the carboxy-S-adenosyl-L-methionine site.

The protein belongs to the class I-like SAM-binding methyltransferase superfamily. CmoB family. Homotetramer.

It catalyses the reaction carboxy-S-adenosyl-L-methionine + 5-hydroxyuridine(34) in tRNA = 5-carboxymethoxyuridine(34) in tRNA + S-adenosyl-L-homocysteine + H(+). In terms of biological role, catalyzes carboxymethyl transfer from carboxy-S-adenosyl-L-methionine (Cx-SAM) to 5-hydroxyuridine (ho5U) to form 5-carboxymethoxyuridine (cmo5U) at position 34 in tRNAs. The protein is tRNA U34 carboxymethyltransferase of Campylobacter jejuni subsp. doylei (strain ATCC BAA-1458 / RM4099 / 269.97).